The sequence spans 247 residues: NAD-dependent protein deacetylase (247 aa).

The region spanning 1 to 247 (MDTRKNLKEL…LGGIVEELGY (247 aa)) is the Deacetylase sirtuin-type domain. A23, T27, F34, R35, Q104, I106, D107, and H122 together coordinate NAD(+). F34 provides a ligand contact to nicotinamide. I106 and D107 together coordinate nicotinamide. Residue H122 is the Proton acceptor of the active site. Positions 130, 133, 152, and 155 each coordinate Zn(2+). 4 residues coordinate NAD(+): T193, S194, N216, and I234.

It belongs to the sirtuin family. Class U subfamily. Zn(2+) serves as cofactor.

It is found in the cytoplasm. The catalysed reaction is N(6)-acetyl-L-lysyl-[protein] + NAD(+) + H2O = 2''-O-acetyl-ADP-D-ribose + nicotinamide + L-lysyl-[protein]. NAD-dependent protein deacetylase which modulates the activities of several enzymes which are inactive in their acetylated form. This is NAD-dependent protein deacetylase from Clostridium tetani (strain Massachusetts / E88).